A 921-amino-acid polypeptide reads, in one-letter code: MKTCWKIPVFFFVCSFLEPWASAAVKRRPRFPVNSNSNGGNELCPKIRIGQDDLPGFDLISQFQVDKAASRRAIQRVVGSATLQVAYKLGNNVDFRIPTRNLYPSGLPEEYSFLTTFRMTGSTLKKNWNIWQIQDSSGKEQVGIKINGQTQSVVFSYKGLDGSLQTAAFSNLSSLFDSQWHKIMIGVERSSATLFVDCNRIESLPIKPRGPIDIDGFAVLGKLADNPQVSVPFELQWMLIHCDPLRPRRETCHELPARITPSQTTDERGPPGEQGPPGPPGPPGVPGIDGIDGDRGPKGPPGPPGPAGEPGKPGAPGKPGTPGADGLTGPDGSPGSIGSKGQKGEPGVPGSRGFPGRGIPGPPGPPGTAGLPGELGRVGPVGDPGRRGPPGPPGPPGPRGTIGFHDGDPLCPNACPPGRSGYPGLPGMRGHKGAKGEIGEPGRQGHKGEEGDQGELGEVGAQGPPGAQGLRGITGIVGDKGEKGARGLDGEPGPQGLPGAPGDQGQRGPPGEAGPKGDRGAEGARGIPGLPGPKGDTGLPGVDGRDGIPGMPGTKGEPGKPGPPGDAGLQGLPGVPGIPGAKGVAGEKGSTGAPGKPGQMGNSGKPGQQGPPGEVGPRGPQGLPGSRGELGPVGSPGLPGKLGSLGSPGLPGLPGPPGLPGMKGDRGVVGEPGPKGEQGASGEEGEAGERGELGDIGLPGPKGSAGNPGEPGLRGPEGSRGLPGVEGPRGPPGPRGVQGEQGATGLPGVQGPPGRAPTDQHIKQVCMRVIQEHFAEMAASLKRPDSGATGLPGRPGPPGPPGPPGENGFPGQMGIRGLPGIKGPPGALGLRGPKGDLGEKGERGPPGRGPNGLPGAIGLPGDPGPASYGRNGRDGERGPPGVAGIPGVPGPPGPPGLPGFCEPASCTMQAGQRAFNKGPDP.

The first 23 residues, 1–23 (MKTCWKIPVFFFVCSFLEPWASA), serve as a signal peptide directing secretion. The segment at 24 to 268 (AVKRRPRFPV…ITPSQTTDER (245 aa)) is nonhelical region (NC4). Cystine bridges form between cysteine 44–cysteine 242 and cysteine 198–cysteine 252. The Laminin G-like domain maps to 50–244 (GQDDLPGFDL…LQWMLIHCDP (195 aa)). A glycan (N-linked (GlcNAc...) asparagine) is linked at asparagine 171. Aspartate 213, aspartate 215, and histidine 253 together coordinate Zn(2+). Disordered stretches follow at residues 254–759 (ELPA…APTD) and 783–905 (RPDS…EPAS). Collagen-like domains lie at 269–324 (GPPG…TPGA), 325–356 (DGLT…GFPG), 358–403 (GIPG…GTIG), 416–472 (PPGR…GLRG), 473–516 (ITGI…AGPK), 587–643 (EKGS…GKLG), 655–712 (GPPG…GEPG), and 713–755 (LRGP…PPGR). Residues 269-405 (GPPGEQGPPG…PGPRGTIGFH (137 aa)) form a triple-helical region (COL3) region. Composition is skewed to pro residues over residues 273 to 285 (EQGP…PPGV) and 298 to 307 (KGPPGPPGPA). Residues 368–383 (TAGLPGELGRVGPVGD) show a composition bias toward low complexity. A compositionally biased stretch (pro residues) spans 387–398 (RGPPGPPGPPGP). The nonhelical region (NC3) stretch occupies residues 406–417 (DGDPLCPNACPP). The interval 418–756 (GRSGYPGLPG…PGVQGPPGRA (339 aa)) is triple-helical region (COL2). Positions 479–489 (DKGEKGARGLD) are enriched in basic and acidic residues. Low complexity-rich tracts occupy residues 602–621 (NSGK…RGPQ) and 630–650 (LGPV…SPGL). The tract at residues 757–786 (PTDQHIKQVCMRVIQEHFAEMAASLKRPDS) is nonhelical region (NC2). Positions 787 to 901 (GATGLPGRPG…PGPPGLPGFC (115 aa)) are triple-helical region (COL1). 2 consecutive Collagen-like domains span residues 790 to 847 (GLPG…GPPG) and 848 to 899 (RGPN…GLPG). A compositionally biased stretch (pro residues) spans 794 to 804 (RPGPPGPPGPP). Residues 833–845 (PKGDLGEKGERGP) are compositionally biased toward basic and acidic residues. Positions 888-897 (VPGPPGPPGL) are enriched in pro residues. The interval 902 to 921 (EPASCTMQAGQRAFNKGPDP) is nonhelical region (NC1).

The protein belongs to the fibril-associated collagens with interrupted helices (FACIT) family. Heterotrimer of an alpha 1(IX), an alpha 2(IX) and an alpha 3(IX) chain. In terms of processing, covalently linked to the telopeptides of type II collagen by lysine-derived cross-links. Post-translationally, prolines at the third position of the tripeptide repeating unit (G-X-Y) are hydroxylated in some or all of the chains.

Its subcellular location is the secreted. The protein resides in the extracellular space. It is found in the extracellular matrix. Its function is as follows. Structural component of hyaline cartilage and vitreous of the eye. This chain is Collagen alpha-1(IX) chain (COL9A1), found in Homo sapiens (Human).